The following is a 162-amino-acid chain: Disulfide bond formation protein B (162 aa).

Topologically, residues 1 to 8 (MTPLFRKA) are cytoplasmic. Residues 9 to 25 (VWLLFAVSVCAFAGSLA) traverse the membrane as a helical segment. The Periplasmic portion of the chain corresponds to 26 to 43 (AQYVLGMEPCVLCISQRL). An intrachain disulfide couples cysteine 35 to cysteine 38. Residues 44-60 (CVLATALCTAIVLMCRP) form a helical membrane-spanning segment. Residues 61–67 (RRRAGGL) lie on the Cytoplasmic side of the membrane. A helical transmembrane segment spans residues 68–85 (FGAVFISIPAVTGISVAA). Residues 86-141 (YQLWLQSLPPGTAPSCGAPWTFRLKGWSLFDWFEPVVRGFGNCAEPDYLLGVALPV) are Periplasmic-facing. Cysteine 101 and cysteine 128 are disulfide-bonded. Residues 142–160 (WSAAYFLAVVLTVWWAWAR) form a helical membrane-spanning segment. Over 161–162 (AK) the chain is Cytoplasmic.

This sequence belongs to the DsbB family.

The protein resides in the cell inner membrane. Required for disulfide bond formation in some periplasmic proteins. Acts by oxidizing the DsbA protein. The polypeptide is Disulfide bond formation protein B (Neisseria meningitidis serogroup C / serotype 2a (strain ATCC 700532 / DSM 15464 / FAM18)).